A 469-amino-acid chain; its full sequence is UDP-N-acetylmuramate--L-alanine ligase (469 aa).

Glycine 113–threonine 119 lines the ATP pocket.

Belongs to the MurCDEF family.

Its subcellular location is the cytoplasm. The catalysed reaction is UDP-N-acetyl-alpha-D-muramate + L-alanine + ATP = UDP-N-acetyl-alpha-D-muramoyl-L-alanine + ADP + phosphate + H(+). It functions in the pathway cell wall biogenesis; peptidoglycan biosynthesis. Cell wall formation. This Neisseria gonorrhoeae (strain ATCC 700825 / FA 1090) protein is UDP-N-acetylmuramate--L-alanine ligase.